Reading from the N-terminus, the 310-residue chain is Oxygen-dependent coproporphyrinogen-III oxidase (310 aa).

S97 lines the substrate pocket. Residues H101 and H111 each coordinate a divalent metal cation. The active-site Proton donor is H111. 113 to 115 (NFR) is a substrate binding site. Residues H150 and H180 each coordinate a divalent metal cation. Residues 245 to 280 (YVEFNLLYDRGTRFGLEFGGRTESILMSLPPRVVWR) are important for dimerization. 263-265 (GGR) is a substrate binding site.

The protein belongs to the aerobic coproporphyrinogen-III oxidase family. As to quaternary structure, homodimer. A divalent metal cation serves as cofactor.

The protein localises to the cytoplasm. It catalyses the reaction coproporphyrinogen III + O2 + 2 H(+) = protoporphyrinogen IX + 2 CO2 + 2 H2O. It participates in porphyrin-containing compound metabolism; protoporphyrin-IX biosynthesis; protoporphyrinogen-IX from coproporphyrinogen-III (O2 route): step 1/1. Involved in the heme biosynthesis. Catalyzes the aerobic oxidative decarboxylation of propionate groups of rings A and B of coproporphyrinogen-III to yield the vinyl groups in protoporphyrinogen-IX. In Coxiella burnetii (strain RSA 493 / Nine Mile phase I), this protein is Oxygen-dependent coproporphyrinogen-III oxidase.